Consider the following 164-residue polypeptide: Ribosome-binding factor A (164 aa).

Belongs to the RbfA family. Monomer. Binds 30S ribosomal subunits, but not 50S ribosomal subunits or 70S ribosomes.

The protein resides in the cytoplasm. Its function is as follows. One of several proteins that assist in the late maturation steps of the functional core of the 30S ribosomal subunit. Associates with free 30S ribosomal subunits (but not with 30S subunits that are part of 70S ribosomes or polysomes). Required for efficient processing of 16S rRNA. May interact with the 5'-terminal helix region of 16S rRNA. This chain is Ribosome-binding factor A, found in Mycobacterium leprae (strain Br4923).